Reading from the N-terminus, the 242-residue chain is Myogenic factor 6 (242 aa).

The segment at 31-63 (SPLYPGSDGTLSPCQDQMPQEAGSDSSGEEHVL) is disordered. Polar residues predominate over residues 39–56 (GTLSPCQDQMPQEAGSDS). One can recognise a bHLH domain in the interval 93–144 (DRRKAATLRERRRLKKINEAFEALKRRTVANPNQRLPKVEILRSAISYIERL).

Efficient DNA binding requires dimerization with another bHLH protein. Interacts with CSRP3. In terms of tissue distribution, skeletal muscle.

It is found in the nucleus. Involved in muscle differentiation (myogenic factor). Induces fibroblasts to differentiate into myoblasts. Probable sequence specific DNA-binding protein. In Mus musculus (Mouse), this protein is Myogenic factor 6 (Myf6).